A 468-amino-acid polypeptide reads, in one-letter code: Maltose fermentation regulatory protein MAL33 (468 aa).

Positions 8–34 (CDYCRVRRVKCDGKKPCSRCIEHNFDC) form a DNA-binding region, zn(2)-C6 fungal-type. Positions 41-49 (KKRGSKPIG) match the Nuclear localization signal motif.

Belongs to the MAL13 family.

The protein resides in the nucleus. Regulates the coordinate transcription of structural MAL3S (maltase) and MAL3T (maltose permease) genes. The polypeptide is Maltose fermentation regulatory protein MAL33 (MAL33) (Saccharomyces cerevisiae (strain ATCC 204508 / S288c) (Baker's yeast)).